The sequence spans 248 residues: 2,3-bisphosphoglycerate-dependent phosphoglycerate mutase (248 aa).

Substrate contacts are provided by residues 8-15 (RHGESEWN), 21-22 (TG), Arg60, 87-90 (ERHY), Lys98, 114-115 (RR), and 183-184 (GN). The Tele-phosphohistidine intermediate role is filled by His9. The active-site Proton donor/acceptor is Glu87.

Belongs to the phosphoglycerate mutase family. BPG-dependent PGAM subfamily.

It catalyses the reaction (2R)-2-phosphoglycerate = (2R)-3-phosphoglycerate. Its pathway is carbohydrate degradation; glycolysis; pyruvate from D-glyceraldehyde 3-phosphate: step 3/5. Functionally, catalyzes the interconversion of 2-phosphoglycerate and 3-phosphoglycerate. In Borrelia garinii subsp. bavariensis (strain ATCC BAA-2496 / DSM 23469 / PBi) (Borreliella bavariensis), this protein is 2,3-bisphosphoglycerate-dependent phosphoglycerate mutase.